Here is a 78-residue protein sequence, read N- to C-terminus: uncharacterized protein (78 aa).

This is an uncharacterized protein from Escherichia coli.